The primary structure comprises 213 residues: MOB kinase activator-like 1 homolog A (213 aa).

Residues cysteine 77, cysteine 82, histidine 159, and histidine 164 each coordinate Zn(2+).

This sequence belongs to the MOB1/phocein family.

This Dictyostelium discoideum (Social amoeba) protein is MOB kinase activator-like 1 homolog A (mobA).